A 206-amino-acid polypeptide reads, in one-letter code: Large ribosomal subunit protein uL4 (206 aa).

The interval 44–78 is disordered; sequence RSGNRAQKDREQVKHTTKKPWRQKGTGRARAGMSS. A compositionally biased stretch (basic residues) spans 58–70; the sequence is HTTKKPWRQKGTG.

The protein belongs to the universal ribosomal protein uL4 family. In terms of assembly, part of the 50S ribosomal subunit.

Its function is as follows. One of the primary rRNA binding proteins, this protein initially binds near the 5'-end of the 23S rRNA. It is important during the early stages of 50S assembly. It makes multiple contacts with different domains of the 23S rRNA in the assembled 50S subunit and ribosome. Functionally, forms part of the polypeptide exit tunnel. The protein is Large ribosomal subunit protein uL4 of Paraburkholderia phytofirmans (strain DSM 17436 / LMG 22146 / PsJN) (Burkholderia phytofirmans).